We begin with the raw amino-acid sequence, 187 residues long: Ribosome-recycling factor (187 aa).

Belongs to the RRF family.

It localises to the cytoplasm. Responsible for the release of ribosomes from messenger RNA at the termination of protein biosynthesis. May increase the efficiency of translation by recycling ribosomes from one round of translation to another. The chain is Ribosome-recycling factor from Orientia tsutsugamushi (strain Ikeda) (Rickettsia tsutsugamushi).